Consider the following 309-residue polypeptide: MEMO1 family protein C4H3.04c (309 aa).

It belongs to the MEMO1 family.

The protein is MEMO1 family protein C4H3.04c of Schizosaccharomyces pombe (strain 972 / ATCC 24843) (Fission yeast).